Reading from the N-terminus, the 724-residue chain is Probable serine/threonine-protein kinase KKQ8 (724 aa).

Disordered stretches follow at residues 1–81 (MVMQ…RQRS) and 93–188 (HPFR…KDIL). Ser19 is modified (phosphoserine). The segment covering 45-54 (PYRSSSTSPK) has biased composition (low complexity). Over residues 95–106 (FRQTGSGASNSP) the composition is skewed to polar residues. Residues 143–162 (RSSSVSSCDSSNGTTSSSDS) show a composition bias toward low complexity. Residues Ser232, Ser238, and Ser241 each carry the phosphoserine modification. A disordered region spans residues 329-355 (SQTNHEKRTGQSPNDSNRSSPTQGRED). Positions 338-351 (GQSPNDSNRSSPTQ) are enriched in polar residues. The 301-residue stretch at 412 to 712 (GHPVGLVGAG…VGKLLDMQWM (301 aa)) folds into the Protein kinase domain. ATP contacts are provided by residues 418 to 426 (VGAGAYGEV) and Lys455. The Proton acceptor role is filled by Asp563.

Belongs to the protein kinase superfamily. CAMK Ser/Thr protein kinase family. NPR/HAL subfamily. HAL5 sub-subfamily.

Its subcellular location is the cytoplasm. The enzyme catalyses L-seryl-[protein] + ATP = O-phospho-L-seryl-[protein] + ADP + H(+). It catalyses the reaction L-threonyl-[protein] + ATP = O-phospho-L-threonyl-[protein] + ADP + H(+). In Saccharomyces cerevisiae (strain ATCC 204508 / S288c) (Baker's yeast), this protein is Probable serine/threonine-protein kinase KKQ8 (KKQ8).